The primary structure comprises 354 residues: Small ribosomal subunit biogenesis GTPase RsgA (354 aa).

The disordered stretch occupies residues 1-46 (MSKKKPLSQGQLRRMRANHEKRLNRDSGDKNTPELQDSSLGPEQSG). Positions 17-32 (ANHEKRLNRDSGDKNT) are enriched in basic and acidic residues. Polar residues predominate over residues 33–46 (PELQDSSLGPEQSG). Positions 108 to 276 (HSSLSRPDLY…LIDSPGVREF (169 aa)) constitute a CP-type G domain. GTP-binding positions include 164 to 167 (NKID) and 218 to 226 (GQSGVGKSS). 4 residues coordinate Zn(2+): cysteine 300, cysteine 305, histidine 307, and cysteine 313.

This sequence belongs to the TRAFAC class YlqF/YawG GTPase family. RsgA subfamily. In terms of assembly, monomer. Associates with 30S ribosomal subunit, binds 16S rRNA. Zn(2+) is required as a cofactor.

Its subcellular location is the cytoplasm. One of several proteins that assist in the late maturation steps of the functional core of the 30S ribosomal subunit. Helps release RbfA from mature subunits. May play a role in the assembly of ribosomal proteins into the subunit. Circularly permuted GTPase that catalyzes slow GTP hydrolysis, GTPase activity is stimulated by the 30S ribosomal subunit. This chain is Small ribosomal subunit biogenesis GTPase RsgA, found in Shewanella oneidensis (strain ATCC 700550 / JCM 31522 / CIP 106686 / LMG 19005 / NCIMB 14063 / MR-1).